Here is a 650-residue protein sequence, read N- to C-terminus: Phosphatidylinositol-3,5-bisphosphate 3-phosphatase MTMR14 (650 aa).

Residues 1-27 (MAGARAAAAAASAGSSASSGNQPPQEL) form a disordered region. N6-acetyllysine is present on Lys194. A glycan (N-linked (GlcNAc...) asparagine) is linked at Asn226. Residue Cys330 is the Phosphocysteine intermediate of the active site. A 1,2-diacyl-sn-glycero-3-phospho-(1D-myo-inositol-3,5-bisphosphate) is bound by residues Gly333, Trp334, Asp335, Arg336, and Arg382. A 1,2-diacyl-sn-glycero-3-phospho-(1D-myo-inositol-3-phosphate)-binding residues include Gly333, Trp334, Asp335, Arg336, and Arg382. The segment at 476–546 (AAWRKSHSSS…PRSVDHPLPG (71 aa)) is disordered. At Ser518 the chain carries Phosphoserine. A glycan (N-linked (GlcNAc...) asparagine) is linked at Asn519. 3 positions are modified to phosphoserine: Ser530, Ser580, and Ser624. Arg638 is subject to Omega-N-methylarginine.

This sequence belongs to the protein-tyrosine phosphatase family. Non-receptor class myotubularin subfamily. Expressed in various tissues, including heart, skeletal muscle, placenta, liver, lung, kidney and pancreas.

The protein resides in the cytoplasm. The enzyme catalyses a 1,2-diacyl-sn-glycero-3-phospho-(1D-myo-inositol-3,5-bisphosphate) + H2O = a 1,2-diacyl-sn-glycero-3-phospho-(1D-myo-inositol-5-phosphate) + phosphate. The catalysed reaction is a 1,2-diacyl-sn-glycero-3-phospho-(1D-myo-inositol-3-phosphate) + H2O = a 1,2-diacyl-sn-glycero-3-phospho-(1D-myo-inositol) + phosphate. In terms of biological role, lipid phosphatase that specifically dephosphorylates the D-3 position of phosphatidylinositol 3-phosphate and phosphatidylinositol 3,5-bisphosphate, generating phosphatidylinositol and phosphatidylinositol 5-phosphate. This chain is Phosphatidylinositol-3,5-bisphosphate 3-phosphatase MTMR14, found in Homo sapiens (Human).